Reading from the N-terminus, the 447-residue chain is Ribosomal protein uS12 methylthiotransferase RimO (447 aa).

Residues 10–120 (PKVGFVSLGC…VVNAVHDVVP (111 aa)) enclose the MTTase N-terminal domain. 6 residues coordinate [4Fe-4S] cluster: cysteine 19, cysteine 55, cysteine 84, cysteine 153, cysteine 157, and cysteine 160. In terms of domain architecture, Radical SAM core spans 139 to 377 (LTPRHYAYLK…MAHQQAISAA (239 aa)). The TRAM domain maps to 380–447 (QMKIGKEIEV…DEYDLWAEML (68 aa)).

The protein belongs to the methylthiotransferase family. RimO subfamily. The cofactor is [4Fe-4S] cluster.

The protein localises to the cytoplasm. It carries out the reaction L-aspartate(89)-[ribosomal protein uS12]-hydrogen + (sulfur carrier)-SH + AH2 + 2 S-adenosyl-L-methionine = 3-methylsulfanyl-L-aspartate(89)-[ribosomal protein uS12]-hydrogen + (sulfur carrier)-H + 5'-deoxyadenosine + L-methionine + A + S-adenosyl-L-homocysteine + 2 H(+). Its function is as follows. Catalyzes the methylthiolation of an aspartic acid residue of ribosomal protein uS12. The protein is Ribosomal protein uS12 methylthiotransferase RimO of Pseudomonas syringae pv. syringae (strain B728a).